We begin with the raw amino-acid sequence, 507 residues long: uncharacterized protein (507 aa).

Residues 1 to 12 are compositionally biased toward low complexity; the sequence is MEKSISSISKAS. The interval 1–20 is disordered; it reads MEKSISSISKASMNSDEKLD. 12 consecutive transmembrane segments (helical) span residues 57-74, 100-120, 126-146, 157-177, 189-209, 221-241, 283-303, 326-346, 353-373, 379-399, 416-436, and 445-465; these read FDFR…FNAL, IMIS…SYLY, ARIL…QAAV, WFLG…LTTF, IFYA…YGVF, YLFL…FLVL, VFKH…GVPL, LMTV…AFIS, GIVL…YGSI, IGVS…SSVL, VFTS…ANIF, and VPAL…VASI.

The protein belongs to the major facilitator superfamily. Allantoate permease family.

Its subcellular location is the endoplasmic reticulum. The protein localises to the membrane. This is an uncharacterized protein from Schizosaccharomyces pombe (strain 972 / ATCC 24843) (Fission yeast).